A 339-amino-acid chain; its full sequence is Phosphate acyltransferase (339 aa).

It belongs to the PlsX family. As to quaternary structure, homodimer. Probably interacts with PlsY.

The protein resides in the cytoplasm. It catalyses the reaction a fatty acyl-[ACP] + phosphate = an acyl phosphate + holo-[ACP]. Its pathway is lipid metabolism; phospholipid metabolism. Its function is as follows. Catalyzes the reversible formation of acyl-phosphate (acyl-PO(4)) from acyl-[acyl-carrier-protein] (acyl-ACP). This enzyme utilizes acyl-ACP as fatty acyl donor, but not acyl-CoA. The polypeptide is Phosphate acyltransferase (Tolumonas auensis (strain DSM 9187 / NBRC 110442 / TA 4)).